We begin with the raw amino-acid sequence, 95 residues long: Hge-scorpine (95 aa).

Positions 1–19 (MNTKLTVLCFLGIVTIVSC) are cleaved as a signal peptide. One can recognise a BetaSPN-type CS-alpha/beta domain in the interval 55–94 (QFGCFANVDVKGDCKRHCKAEDKEGICHGTKCKCGVPISY). Intrachain disulfides connect Cys58–Cys81, Cys68–Cys86, and Cys72–Cys88.

This sequence belongs to the long chain scorpion toxin family. Class 3 subfamily. As to expression, expressed by the venom gland.

It localises to the secreted. Has antibacterial activity against B.subtilis, but not against S.aureus. Also has hemolytic and cytolytic activities. Since cell lysis occurs at the tested concentrations, observation of activity on potassium channels is impossible. In terms of biological role, blocks Kv1.1/KCNA1 (IC(50)=185 nM) potassium channels. Shows a weak hemolytic activity. The protein is Hge-scorpine of Hoffmannihadrurus gertschi (Scorpion).